The chain runs to 716 residues: MTMFNKIVKEFQWGQHKVRLETGEIARQASGAVIVDVEDTVVLATVVGARTAKPGQDFFPLTVDYLEKTYAAGKIPGGFFRREGRPSEGETLISRLIDRPLRPLFPEGFYNEVQVVIHVLSLNPEIPADIPALIGASAALAVSGLPFNGPVGAARVAYINNEYVLNPTRPQMKESALDLIVAGTERAVLMVESEAQQLSEEVMLGGVVFGHEQMQIAIDAIHDLVREGGKPEWDWQPAAKNEPLIARVTELAQADLLAAYQLRDKQARSAKLKEIYAATSAKLEEDAAAGGTVAADKATVGNVLFDIEAKIVRTQILNGEPRIDGRDTRTVRPIEIRTGVLPRTHGSALFTRGETQALVVATLGTKGDEQNIDALEGEYRERFMLHYNMPPFATGETGRVGSPKRREIGHGRLAKRALAACLPSADEFGYSIRVVSEITESNGSSSMASVCGGCLALMDAGVPMKAHVAGIAMGLILEGNKFAVLTDILGDEDHLGDMDFKVAGTEQGVTALQMDIKIQGITREIMQVALAQAKEGRLHILGKMTSAVSGANTVLSDYAPRMITIKINPEKIRDVIGKGGSVIRALTEETGTTIDISDDGVVTIASTSSEGMAEAKKRIENITLEVEVGQVYEGTVLKLLDFGAIVNILPGKDGLLHISEIANERIKDINDYLKDGQQVKVKVIQTDEKGRVRLSAKALLNDAANGAPQGEPTPQQ.

The Mg(2+) site is built by Asp-493 and Asp-499. Residues 560–619 form the KH domain; the sequence is PRMITIKINPEKIRDVIGKGGSVIRALTEETGTTIDISDDGVVTIASTSSEGMAEAKKRI. Residues 629-697 enclose the S1 motif domain; sequence GQVYEGTVLK…EKGRVRLSAK (69 aa).

This sequence belongs to the polyribonucleotide nucleotidyltransferase family. Mg(2+) serves as cofactor.

The protein resides in the cytoplasm. It carries out the reaction RNA(n+1) + phosphate = RNA(n) + a ribonucleoside 5'-diphosphate. In terms of biological role, involved in mRNA degradation. Catalyzes the phosphorolysis of single-stranded polyribonucleotides processively in the 3'- to 5'-direction. The sequence is that of Polyribonucleotide nucleotidyltransferase from Paraburkholderia xenovorans (strain LB400).